A 261-amino-acid polypeptide reads, in one-letter code: Global transcriptional regulator CodY (261 aa).

Positions Met1–Leu159 are GAF domain. The H-T-H motif DNA-binding region spans Ala207–Arg226.

It belongs to the CodY family.

The protein resides in the cytoplasm. DNA-binding global transcriptional regulator which is involved in the adaptive response to starvation and acts by directly or indirectly controlling the expression of numerous genes in response to nutrient availability. During rapid exponential growth, CodY is highly active and represses genes whose products allow adaptation to nutrient depletion. The polypeptide is Global transcriptional regulator CodY (Streptococcus mutans serotype c (strain ATCC 700610 / UA159)).